The primary structure comprises 360 residues: Aminomethyltransferase (360 aa).

This sequence belongs to the GcvT family. The glycine cleavage system is composed of four proteins: P, T, L and H.

It catalyses the reaction N(6)-[(R)-S(8)-aminomethyldihydrolipoyl]-L-lysyl-[protein] + (6S)-5,6,7,8-tetrahydrofolate = N(6)-[(R)-dihydrolipoyl]-L-lysyl-[protein] + (6R)-5,10-methylene-5,6,7,8-tetrahydrofolate + NH4(+). Its function is as follows. The glycine cleavage system catalyzes the degradation of glycine. The polypeptide is Aminomethyltransferase (Exiguobacterium sibiricum (strain DSM 17290 / CCUG 55495 / CIP 109462 / JCM 13490 / 255-15)).